Reading from the N-terminus, the 342-residue chain is Oxygen-dependent coproporphyrinogen-III oxidase (342 aa).

Residue Ser-98 coordinates substrate. His-102 and His-112 together coordinate a divalent metal cation. His-112 functions as the Proton donor in the catalytic mechanism. 114 to 116 (NYR) is a substrate binding site. 2 residues coordinate a divalent metal cation: His-146 and His-176. The segment at 266–301 (YVEFNLVWDRGTIFGLQTNGRTESILMSLPPLARWE) is important for dimerization.

It belongs to the aerobic coproporphyrinogen-III oxidase family. In terms of assembly, homodimer. It depends on a divalent metal cation as a cofactor.

The protein localises to the cytoplasm. It catalyses the reaction coproporphyrinogen III + O2 + 2 H(+) = protoporphyrinogen IX + 2 CO2 + 2 H2O. Its pathway is porphyrin-containing compound metabolism; protoporphyrin-IX biosynthesis; protoporphyrinogen-IX from coproporphyrinogen-III (O2 route): step 1/1. Involved in the heme and chlorophyll biosynthesis. Catalyzes the aerobic oxidative decarboxylation of propionate groups of rings A and B of coproporphyrinogen-III to yield the vinyl groups in protoporphyrinogen-IX. The sequence is that of Oxygen-dependent coproporphyrinogen-III oxidase from Prochlorococcus marinus (strain MIT 9301).